Consider the following 243-residue polypeptide: Urease accessory protein UreF (243 aa).

The protein belongs to the UreF family. In terms of assembly, ureD, UreF and UreG form a complex that acts as a GTP-hydrolysis-dependent molecular chaperone, activating the urease apoprotein by helping to assemble the nickel containing metallocenter of UreC. The UreE protein probably delivers the nickel.

The protein localises to the cytoplasm. In terms of biological role, required for maturation of urease via the functional incorporation of the urease nickel metallocenter. This chain is Urease accessory protein UreF, found in Rhodopseudomonas palustris (strain BisB5).